A 659-amino-acid polypeptide reads, in one-letter code: RNA polymerase II subunit A C-terminal domain phosphatase (659 aa).

One can recognise an FCP1 homology domain in the interval 139–303; that stretch reads ITNRKLVLLV…KNSKEQMPVQ (165 aa). One can recognise a BRCT domain in the interval 351-443; sequence ERHKVLDGCV…LKADENLFQL (93 aa). A compositionally biased stretch (acidic residues) spans 484–504; it reads ALSDDEDDGDNEDEDDDGNDV. A disordered region spans residues 484 to 640; that stretch reads ALSDDEDDGD…PESDDDDEFE (157 aa). Positions 505–519 are enriched in basic and acidic residues; sequence GEDKGDENLEEKQEK. Polar residues predominate over residues 529-538; sequence QNGSVENQSG. 3 stretches are compositionally biased toward acidic residues: residues 560-576, 596-607, and 616-640; these read MEDE…DDDT, ENEDDAVFDVDD, and IDEE…DEFE.

The protein localises to the nucleus. The catalysed reaction is O-phospho-L-seryl-[protein] + H2O = L-seryl-[protein] + phosphate. It catalyses the reaction O-phospho-L-threonyl-[protein] + H2O = L-threonyl-[protein] + phosphate. Its function is as follows. During the late stages of oogenesis, dephosphorylates 'Ser-5' of the heptad repeats YSPTSPS in the C-terminal domain of the largest RNA polymerase II subunit ama-1. Similarly, dephosphorylates 'Ser-5' of ama-1 in early embryonic cells prior to the activation of the zygotic transcription program at the 4-cell embryonic stage. May dephosphorylate 'Ser-2' of the ama-1 heptad repeats YSPTSPS in embryonic somatic and germline cells. The polypeptide is RNA polymerase II subunit A C-terminal domain phosphatase (Caenorhabditis elegans).